Consider the following 286-residue polypeptide: MSEMVDTTQTTTEKKLTQSDIRGVFLRSNLFQGSWNFERMQALGFCFSMVPAIRRLYPENNEARKQAIRRHLEFFNTQPFVAAPILGVTLALEEQRANGAEIDDGAINGIKVGLMGPLAGVGDPIFWGTVRPVFAALGAGIAMSGSLLGPLLFFILFNLVRLATRYYGVAYGYSKGIDIVKDMGGGFLQKLTEGASILGLFVMGALVNKWTHVNIPLVVSRITDQTGKEHVTTVQTILDQLMPGLVPLLLTFACMWLLRKKVNPLWIIVGFFVIGIAGYACGLLGL.

Position 1 is an N-formylmethionine (Met-1). Over 1–17 the chain is Cytoplasmic; it reads MSEMVDTTQTTTEKKLT. Positions 14–284 constitute a PTS EIID domain; the sequence is KKLTQSDIRG…GIAGYACGLL (271 aa). The stretch at 18-55 is an intramembrane region; that stretch reads QSDIRGVFLRSNLFQGSWNFERMQALGFCFSMVPAIRR. Residues 56–62 are Cytoplasmic-facing; that stretch reads LYPENNE. The stretch at 63-95 is an intramembrane region; that stretch reads ARKQAIRRHLEFFNTQPFVAAPILGVTLALEEQ. The Cytoplasmic portion of the chain corresponds to 96-103; it reads RANGAEID. Positions 104–143 form a transmembrane segment; the sequence is DGAINGIKVGLMGPLAGVGDPIFWGTVRPVFAALGAGIAM. Residues 144-147 are Periplasmic-facing; that stretch reads SGSL. A membrane pass occupies residues 148-176; that stretch reads LGPLLFFILFNLVRLATRYYGVAYGYSKG. The Cytoplasmic portion of the chain corresponds to 177–186; the sequence is IDIVKDMGGG. Positions 187–212 form a transmembrane segment; that stretch reads FLQKLTEGASILGLFVMGALVNKWTH. Residues 213 to 244 are Periplasmic-facing; the sequence is VNIPLVVSRITDQTGKEHVTTVQTILDQLMPG. A transmembrane span lies at residues 245-258; that stretch reads LVPLLLTFACMWLL. Over 259-264 the chain is Cytoplasmic; that stretch reads RKKVNP. A transmembrane span lies at residues 265-283; the sequence is LWIIVGFFVIGIAGYACGL. At 284 to 286 the chain is on the periplasmic side; sequence LGL.

As to quaternary structure, homotrimer of protomers that are composed of two subunits, IIC and IID.

The protein localises to the cell inner membrane. Functionally, the phosphoenolpyruvate-dependent sugar phosphotransferase system (sugar PTS), a major carbohydrate active transport system, catalyzes the phosphorylation of incoming sugar substrates concomitantly with their translocation across the cell membrane. The enzyme II ManXYZ PTS system is involved in mannose transport. The polypeptide is PTS system mannose-specific EIID component (manZ) (Escherichia coli O6:H1 (strain CFT073 / ATCC 700928 / UPEC)).